Consider the following 250-residue polypeptide: 5'-nucleotidase SurE (250 aa).

Aspartate 8, aspartate 9, serine 40, and asparagine 95 together coordinate a divalent metal cation.

Belongs to the SurE nucleotidase family. A divalent metal cation is required as a cofactor.

The protein localises to the cytoplasm. The enzyme catalyses a ribonucleoside 5'-phosphate + H2O = a ribonucleoside + phosphate. Nucleotidase that shows phosphatase activity on nucleoside 5'-monophosphates. This Nitratidesulfovibrio vulgaris (strain DP4) (Desulfovibrio vulgaris) protein is 5'-nucleotidase SurE.